The sequence spans 398 residues: Homeobox protein knotted-1-like 1 (398 aa).

Disordered regions lie at residues 20-61 (SPIS…HHHQ), 78-102 (NCFR…ASSS), and 241-273 (LNNP…EIDP). The segment covering 23 to 56 (SSSNKNDNTSDTNNNNNNNNSSNYGPGYNNTNNN) has biased composition (low complexity). Polar residues predominate over residues 87–102 (PNNNNNPSVKSEASSS). Positions 279-299 (ELKNHLLKKYSGYLSSLKQEL) constitute an ELK domain. Residues 300–363 (SKKKKKGKLP…NQRKRHWKPS (64 aa)) constitute a DNA-binding region (homeobox; TALE-type).

It belongs to the TALE/KNOX homeobox family. In terms of assembly, may form heterodimeric complex with the TALE/BELL proteins BEL1, BLH2, BLH8/PNF and BLH9/PNY. Interacts with OFP1, OFP2, OFP4, OFP6 and OFP12. Interacts with CCT7 and CCT8. Interacts with KNATM-B. Binds to AGO10/PNH. Interacts with BZIP30. As to expression, expressed in the vegetative meristem. Present in the base of flower primordia.

The protein localises to the nucleus. Its function is as follows. May play a role in meristem function, and may be involved in maintaining cells in an undifferentiated, meristematic state, and its expression disappears at the same time the shoot apex undergoes the transition from vegetative to reproductive development. Positive regulator of LATERAL ORGAN BOUNDARIES (LOB). Probably binds to the DNA sequence 5'-TGAC-3'. Able to traffic from the L1 to the L2/L3 layers of the meristem, presumably through plasmodesmata. This is Homeobox protein knotted-1-like 1 (KNAT1) from Arabidopsis thaliana (Mouse-ear cress).